A 62-amino-acid chain; its full sequence is Conotoxin Cal12.2e (62 aa).

The first 19 residues, 1–19 (MKLTCVLVVLLLVLPFGDL), serve as a signal peptide directing secretion.

This sequence belongs to the conotoxin O1 superfamily. Post-translationally, contains 4 disulfide bonds. As to expression, expressed by the venom duct.

It is found in the secreted. Its function is as follows. Probable neurotoxin. The chain is Conotoxin Cal12.2e from Californiconus californicus (California cone).